The sequence spans 638 residues: 1-deoxy-D-xylulose-5-phosphate synthase (638 aa).

Thiamine diphosphate-binding positions include His-74 and 115 to 117 (GHS). Position 146 (Asp-146) interacts with Mg(2+). Residues 147-148 (GA), Asn-175, Tyr-286, and Glu-366 each bind thiamine diphosphate. Asn-175 lines the Mg(2+) pocket.

Belongs to the transketolase family. DXPS subfamily. In terms of assembly, homodimer. It depends on Mg(2+) as a cofactor. Requires thiamine diphosphate as cofactor.

The enzyme catalyses D-glyceraldehyde 3-phosphate + pyruvate + H(+) = 1-deoxy-D-xylulose 5-phosphate + CO2. It participates in metabolic intermediate biosynthesis; 1-deoxy-D-xylulose 5-phosphate biosynthesis; 1-deoxy-D-xylulose 5-phosphate from D-glyceraldehyde 3-phosphate and pyruvate: step 1/1. Catalyzes the acyloin condensation reaction between C atoms 2 and 3 of pyruvate and glyceraldehyde 3-phosphate to yield 1-deoxy-D-xylulose-5-phosphate (DXP). The sequence is that of 1-deoxy-D-xylulose-5-phosphate synthase from Syntrophomonas wolfei subsp. wolfei (strain DSM 2245B / Goettingen).